A 239-amino-acid chain; its full sequence is Large ribosomal subunit protein uL1 (239 aa).

The protein belongs to the universal ribosomal protein uL1 family. Part of the 50S ribosomal subunit.

In terms of biological role, binds directly to 23S rRNA. The L1 stalk is quite mobile in the ribosome, and is involved in E site tRNA release. Functionally, protein L1 is also a translational repressor protein, it controls the translation of the L11 operon by binding to its mRNA. The protein is Large ribosomal subunit protein uL1 of Rhodococcus erythropolis (strain PR4 / NBRC 100887).